A 495-amino-acid chain; its full sequence is Omega-crystallin (495 aa).

It belongs to the aldehyde dehydrogenase family. In terms of tissue distribution, lens.

Functionally, omega-crystallins are structural components of squids and octopi eye lens. Contains relatively little if any DHAL activity. The protein is Omega-crystallin of Nototodarus sloanii (Wellington flying squid).